The sequence spans 282 residues: Ribosomal RNA small subunit methyltransferase A (282 aa).

S-adenosyl-L-methionine contacts are provided by H11, L13, G44, E65, D90, and N106.

Belongs to the class I-like SAM-binding methyltransferase superfamily. rRNA adenine N(6)-methyltransferase family. RsmA subfamily.

The protein localises to the cytoplasm. The enzyme catalyses adenosine(1518)/adenosine(1519) in 16S rRNA + 4 S-adenosyl-L-methionine = N(6)-dimethyladenosine(1518)/N(6)-dimethyladenosine(1519) in 16S rRNA + 4 S-adenosyl-L-homocysteine + 4 H(+). Functionally, specifically dimethylates two adjacent adenosines (A1518 and A1519) in the loop of a conserved hairpin near the 3'-end of 16S rRNA in the 30S particle. May play a critical role in biogenesis of 30S subunits. The chain is Ribosomal RNA small subunit methyltransferase A from Synechococcus sp. (strain JA-2-3B'a(2-13)) (Cyanobacteria bacterium Yellowstone B-Prime).